The following is a 625-amino-acid chain: Chaperone protein HtpG (625 aa).

Residues 1–341 (MEKKQFQAES…SEDLSLNISR (341 aa)) are a; substrate-binding. The segment at 342 to 551 (EMLQHDRQLK…DGEITLEMEK (210 aa)) is b. The tract at residues 552-625 (VLQAMPDNQN…FSQNMCKVMV (74 aa)) is c.

The protein belongs to the heat shock protein 90 family. Homodimer.

The protein resides in the cytoplasm. Molecular chaperone. Has ATPase activity. The chain is Chaperone protein HtpG from Shouchella clausii (strain KSM-K16) (Alkalihalobacillus clausii).